We begin with the raw amino-acid sequence, 661 residues long: uncharacterized protein (661 aa).

A signal peptide spans 1–24 (MKTLKTLKIFIIVFIASVSLASFA). A run of 6 helical transmembrane segments spans residues 226–246 (IIGA…ALNT), 254–274 (IALF…LGPL), 410–430 (IILA…LYFI), 436–456 (CMIT…MALF), 469–489 (VCIS…LLIT), and 562–582 (VVSI…FYYF). The interval 629-661 (GKPLVGDKPGVGGKRKEGEQQGGDLASGSGGGK) is disordered.

It belongs to the TrbL/VirB6 family.

It localises to the cell membrane. This is an uncharacterized protein from Rickettsia conorii (strain ATCC VR-613 / Malish 7).